The following is a 142-amino-acid chain: DNA-directed RNA polymerase II subunit RPB4 (142 aa).

It belongs to the eukaryotic RPB4 RNA polymerase subunit family. Component of the RNA polymerase II (Pol II) core complex consisting of 12 subunits: a ten-subunit catalytic core composed of POLR2A/RPB1, POLR2B/RPB2, POLR2C/RPB3, POLR2I/RPB9, POLR2J/RPB11, POLR2E/RPABC1, POLR2F/RPABC2, POLR2H/RPABC3, POLR2K/RPABC4 and POLR2L/RPABC5 and a mobile stalk composed of two subunits POLR2D/RPB4 and POLR2G/RPB7, protruding from the core and functioning primarily in transcription initiation. Part of Pol II(G) complex, in which Pol II core associates with an additional subunit POLR2M; unlike conventional Pol II, Pol II(G) functions as a transcriptional repressor. Part of Pol II pre-initiation complex (PIC), in which Pol II core assembles with Mediator, general transcription factors and other specific initiation factors including GTF2E1, GTF2E2, GTF2F1, GTF2F2, TCEA1, ERCC2, ERCC3, GTF2H2, GTF2H3, GTF2H4, GTF2H5, GTF2A1, GTF2A2, GTF2B and TBP; this large multi-subunit PIC complex mediates DNA unwinding and targets Pol II core to the transcription start site where the first phosphodiester bond forms.

The protein resides in the nucleus. Core component of RNA polymerase II (Pol II), a DNA-dependent RNA polymerase which synthesizes mRNA precursors and many functional non-coding RNAs using the four ribonucleoside triphosphates as substrates. Pol II is the central component of the basal RNA polymerase II transcription machinery. It is composed of mobile elements that move relative to each other. POLR2D/RPB4 is part of a subcomplex with POLR2G/RPB7 that binds to a pocket formed by POLR2A/RPB1, POLR2B/RPB2 and POLR2F/RPABC2 at the base of the clamp element. The POLR2D/RPB4-POLR2G/RPB7 subcomplex seems to lock the clamp via POLR2G/RPB7 in the closed conformation thus preventing double-stranded DNA to enter the active site cleft. The POLR2D/RPB4-POLR2G/RPB7 subcomplex binds single-stranded DNA and RNA. The sequence is that of DNA-directed RNA polymerase II subunit RPB4 (POLR2D) from Bos taurus (Bovine).